A 477-amino-acid polypeptide reads, in one-letter code: Bifunctional protein HldE (477 aa).

Positions 1–318 (MKVNLPAFER…ENAVRGRADT (318 aa)) are ribokinase. Position 195–198 (195–198 (NLSE)) interacts with ATP. The active site involves D264. A cytidylyltransferase region spans residues 344–477 (MTNGVFDILH…IKKIQTESEK (134 aa)).

This sequence in the N-terminal section; belongs to the carbohydrate kinase PfkB family. It in the C-terminal section; belongs to the cytidylyltransferase family. As to quaternary structure, homodimer.

It catalyses the reaction D-glycero-beta-D-manno-heptose 7-phosphate + ATP = D-glycero-beta-D-manno-heptose 1,7-bisphosphate + ADP + H(+). The catalysed reaction is D-glycero-beta-D-manno-heptose 1-phosphate + ATP + H(+) = ADP-D-glycero-beta-D-manno-heptose + diphosphate. It participates in nucleotide-sugar biosynthesis; ADP-L-glycero-beta-D-manno-heptose biosynthesis; ADP-L-glycero-beta-D-manno-heptose from D-glycero-beta-D-manno-heptose 7-phosphate: step 1/4. The protein operates within nucleotide-sugar biosynthesis; ADP-L-glycero-beta-D-manno-heptose biosynthesis; ADP-L-glycero-beta-D-manno-heptose from D-glycero-beta-D-manno-heptose 7-phosphate: step 3/4. In terms of biological role, catalyzes the phosphorylation of D-glycero-D-manno-heptose 7-phosphate at the C-1 position to selectively form D-glycero-beta-D-manno-heptose-1,7-bisphosphate. Functionally, catalyzes the ADP transfer from ATP to D-glycero-beta-D-manno-heptose 1-phosphate, yielding ADP-D-glycero-beta-D-manno-heptose. The polypeptide is Bifunctional protein HldE (Salmonella agona (strain SL483)).